Here is a 67-residue protein sequence, read N- to C-terminus: Large ribosomal subunit protein bL35 (67 aa).

Belongs to the bacterial ribosomal protein bL35 family.

In Bartonella henselae (strain ATCC 49882 / DSM 28221 / CCUG 30454 / Houston 1) (Rochalimaea henselae), this protein is Large ribosomal subunit protein bL35.